Consider the following 126-residue polypeptide: Methylglyoxal synthase (126 aa).

An MGS-like domain is found at 1-126 (MAGSKCLALI…AIKLLPTLEA (126 aa)). Substrate contacts are provided by residues His-12, Lys-16, 38-41 (TGTT), and 59-60 (SG). Asp-65 (proton donor/acceptor) is an active-site residue. His-92 contributes to the substrate binding site.

The protein belongs to the methylglyoxal synthase family.

The catalysed reaction is dihydroxyacetone phosphate = methylglyoxal + phosphate. Catalyzes the formation of methylglyoxal from dihydroxyacetone phosphate. This Rhizobium etli (strain ATCC 51251 / DSM 11541 / JCM 21823 / NBRC 15573 / CFN 42) protein is Methylglyoxal synthase.